The sequence spans 411 residues: UPF0761 membrane protein PLES_43641 (411 aa).

6 helical membrane-spanning segments follow: residues leucine 36–phenylalanine 56, histidine 92–isoleucine 112, phenylalanine 132–valine 152, leucine 174–valine 194, glycine 207–phenylalanine 229, and isoleucine 244–cysteine 264.

The protein belongs to the UPF0761 family.

It localises to the cell inner membrane. This chain is UPF0761 membrane protein PLES_43641, found in Pseudomonas aeruginosa (strain LESB58).